Reading from the N-terminus, the 903-residue chain is Translation initiation factor IF-2 (903 aa).

The segment at 49 to 314 (LNREHGSGPD…GSSLQQGFNK (266 aa)) is disordered. Polar residues predominate over residues 68-82 (STLNIQGTGGKSKSV). 2 stretches are compositionally biased toward basic and acidic residues: residues 93 to 163 (VKRD…EAAE) and 174 to 225 (EVSK…ENAT). Over residues 265–279 (GRARPAKVARQKKSN) the composition is skewed to basic residues. Residues 280–293 (KHSESKADREEARA) are compositionally biased toward basic and acidic residues. The 170-residue stretch at 402–571 (PRAPVVTIMG…LLQSEVLELK (170 aa)) folds into the tr-type G domain. The interval 411–418 (GHVDHGKT) is G1. 411–418 (GHVDHGKT) is a GTP binding site. The interval 436 to 440 (GITQH) is G2. The segment at 457 to 460 (DTPG) is G3. GTP contacts are provided by residues 457–461 (DTPGH) and 511–514 (NKID). Residues 511–514 (NKID) form a G4 region. Positions 547–549 (SAK) are G5.

Belongs to the TRAFAC class translation factor GTPase superfamily. Classic translation factor GTPase family. IF-2 subfamily.

It localises to the cytoplasm. One of the essential components for the initiation of protein synthesis. Protects formylmethionyl-tRNA from spontaneous hydrolysis and promotes its binding to the 30S ribosomal subunits. Also involved in the hydrolysis of GTP during the formation of the 70S ribosomal complex. The chain is Translation initiation factor IF-2 from Cronobacter sakazakii (strain ATCC BAA-894) (Enterobacter sakazakii).